Reading from the N-terminus, the 587-residue chain is Protein NRT1/ PTR FAMILY 2.9 (587 aa).

The next 12 membrane-spanning stretches (helical) occupy residues 35 to 55, 65 to 85, 94 to 114, 135 to 155, 181 to 201, 209 to 229, 325 to 345, 368 to 388, 412 to 432, 457 to 477, 493 to 513, and 540 to 560; these read FEKL…TTVF, VVNI…FLCD, LSFA…TAVI, IGQI…AGGI, FFNW…TLIV, WSIG…IFFA, CVIR…AYIQ, IPAG…IPIY, VGAG…VEQY, GMWL…AGVG, FAGS…TFLL, and YFYF…LLVS.

It belongs to the major facilitator superfamily. Proton-dependent oligopeptide transporter (POT/PTR) (TC 2.A.17) family. As to expression, expressed in roots, stems and major veins of the leaves. Detected in the companion cells of the root phloem.

The protein resides in the cell membrane. In terms of biological role, low-affinity nitrate transporter facilitating nitrate loading into root phloem. Not involved in dipeptides transport, but has a weak glucosinolate transport activity. This Arabidopsis thaliana (Mouse-ear cress) protein is Protein NRT1/ PTR FAMILY 2.9 (NPF2.9).